Here is a 914-residue protein sequence, read N- to C-terminus: Exoglucanase-2 (914 aa).

The first 33 residues, 1–33, serve as a signal peptide directing secretion; the sequence is MKRRLMKGISLLTLVFLIGIMLQLSLKSELTAY. In terms of domain architecture, CBM3 spans 763–914; sequence VEGVLIIQSF…SGNLVYGIEP (152 aa).

This sequence belongs to the glycosyl hydrolase 48 (cellulase L) family.

The catalysed reaction is Hydrolysis of (1-&gt;4)-beta-D-glucosidic linkages in cellulose and cellotetraose, releasing cellobiose from the non-reducing ends of the chains.. The protein is Exoglucanase-2 (celY) of Thermoclostridium stercorarium (strain ATCC 35414 / DSM 8532 / NCIMB 11754) (Clostridium stercorarium).